The sequence spans 440 residues: GTPase Der (440 aa).

EngA-type G domains follow at residues 3-168 (PIIA…GKMD) and 177-353 (LKLA…EEYT). Residues 9 to 16 (GRPNVGKS), 56 to 60 (DTGGL), 119 to 122 (NKID), 183 to 190 (GKPNAGKS), 230 to 234 (DTAGI), and 295 to 298 (NKWD) each bind GTP. One can recognise a KH-like domain in the interval 354–438 (KRISTGLLNT…PIMISFENKS (85 aa)).

The protein belongs to the TRAFAC class TrmE-Era-EngA-EngB-Septin-like GTPase superfamily. EngA (Der) GTPase family. In terms of assembly, associates with the 50S ribosomal subunit.

Its function is as follows. GTPase that plays an essential role in the late steps of ribosome biogenesis. The protein is GTPase Der of Fusobacterium nucleatum subsp. nucleatum (strain ATCC 25586 / DSM 15643 / BCRC 10681 / CIP 101130 / JCM 8532 / KCTC 2640 / LMG 13131 / VPI 4355).